Consider the following 1070-residue polypeptide: MPKRDDIKTILVIGSGPIVIGQAAEFDYAGTQACLSLKEEGYRVVLVNSNPATIMTDAEMADKVYIEPITLDFVSRIIRKERPDAILPTLGGQTGLNMAMELSAAGILDECNVEVLGTDLTAIKKAEDREAFRDLMNELGEPVPESDIIHNLDEAYTFVERIGYPVIVRPAYTLGGSGGGICHNEQELIETVTSGLKLSPVTQCLLEKSIAGFKEVEYEVMRDANNNAMVVCNMENIDPVGIHTGDSIVVAPSQTLSDREYQLLRDVSLKIIRALEIEGGCNVQLALDPDSYNYYVIEVNPRVSRSSALASKATGYPIAKLAAKIAVGLTLDEVRNPVTGTTYAHFEPTLDYVVAKIPRFAFDKFEQADRRLGTQMKATGEVMAIGRSWEEALLKAVRSLEIGADHLLLEEAENADAETLERKICFPEDDRLFFLAAALRRGQTIEQLHAKTKIDLFFLYKLSKTIELENRLKENPQNEEILAEAKRAGFSDAFIATCWNIDEQAIYDLRKAQNLFPVYKMVDTCAAEFESTTPYFYSTYEDENESIRSSKESVIVLGSGPIRIGQGVEFDYATVHSVWAIQQAGYEAIIINNNPETVSTDFSISDKLYFEPLTLEDVMHVIEIEQPLGVVVQFGGQTAINLADGLAKRGVKILGTSLEDTDRAENRDAFEKALEILQIPQPAGKTATSVEAAIKVATDIGYPVLVRPSYVLGGRAMEIVESEEALKHYMTNAVKVNPKHPVLVDRYVSGQEVEVDAISDGENVLIPGIMEHIERAGVHSGDSIAVYPAQRLSEQVKNTIVDYTTRLATGLNIIGMLNIQYVVDGEEVFVIEVNPRSSRTAPFLSKITEIPMANVATRVILGENLIDLGYTPGLAPEKQEIFVKVPVFSFAKLRSVDTSLGPEMKSTGEVMGKDVTLEKALYKGFVASGTTMHDYGTVLLTVADRDKEEAVELAKRFNRIGFTIMATKGTASTLEEAEIPVSQVKKIGENQETLIDYIRNGQVTLVVNTLTTGKRPERDGFQIRRESVENGIPVCTSLDTAEAILRVLESRSFELESMNASEVKQPKARV.

Residues 1 to 401 form a carboxyphosphate synthetic domain region; that stretch reads MPKRDDIKTI…ALLKAVRSLE (401 aa). Arg-129, Arg-169, Gly-175, Gly-176, Lys-208, Ile-210, Glu-215, Gly-241, Ile-242, His-243, Gln-284, and Glu-298 together coordinate ATP. The region spanning 133–327 is the ATP-grasp 1 domain; that stretch reads RDLMNELGEP…IAKLAAKIAV (195 aa). 3 residues coordinate Mg(2+): Gln-284, Glu-298, and Asn-300. Positions 284, 298, and 300 each coordinate Mn(2+). The tract at residues 402 to 546 is oligomerization domain; sequence IGADHLLLEE…YSTYEDENES (145 aa). Residues 547–929 form a carbamoyl phosphate synthetic domain region; it reads IRSSKESVIV…ALYKGFVASG (383 aa). The 191-residue stretch at 671 to 861 folds into the ATP-grasp 2 domain; that stretch reads EKALEILQIP…MANVATRVIL (191 aa). Arg-707, Arg-746, Val-748, Glu-752, Gly-777, Val-778, His-779, Ser-780, Gln-820, and Glu-832 together coordinate ATP. Residues Gln-820, Glu-832, and Asn-834 each coordinate Mg(2+). Mn(2+)-binding residues include Gln-820, Glu-832, and Asn-834. Positions 930 to 1070 constitute an MGS-like domain; the sequence is TTMHDYGTVL…SEVKQPKARV (141 aa). An allosteric domain region spans residues 930 to 1070; it reads TTMHDYGTVL…SEVKQPKARV (141 aa).

It belongs to the CarB family. In terms of assembly, composed of two chains; the small (or glutamine) chain promotes the hydrolysis of glutamine to ammonia, which is used by the large (or ammonia) chain to synthesize carbamoyl phosphate. Tetramer of heterodimers (alpha,beta)4. Requires Mg(2+) as cofactor. Mn(2+) serves as cofactor.

The catalysed reaction is hydrogencarbonate + L-glutamine + 2 ATP + H2O = carbamoyl phosphate + L-glutamate + 2 ADP + phosphate + 2 H(+). It carries out the reaction hydrogencarbonate + NH4(+) + 2 ATP = carbamoyl phosphate + 2 ADP + phosphate + 2 H(+). Its pathway is amino-acid biosynthesis; L-arginine biosynthesis; carbamoyl phosphate from bicarbonate: step 1/1. It participates in pyrimidine metabolism; UMP biosynthesis via de novo pathway; (S)-dihydroorotate from bicarbonate: step 1/3. Its function is as follows. Large subunit of the glutamine-dependent carbamoyl phosphate synthetase (CPSase). CPSase catalyzes the formation of carbamoyl phosphate from the ammonia moiety of glutamine, carbonate, and phosphate donated by ATP, constituting the first step of 2 biosynthetic pathways, one leading to arginine and/or urea and the other to pyrimidine nucleotides. The large subunit (synthetase) binds the substrates ammonia (free or transferred from glutamine from the small subunit), hydrogencarbonate and ATP and carries out an ATP-coupled ligase reaction, activating hydrogencarbonate by forming carboxy phosphate which reacts with ammonia to form carbamoyl phosphate. The protein is Carbamoyl phosphate synthase large chain of Listeria innocua serovar 6a (strain ATCC BAA-680 / CLIP 11262).